The following is a 254-amino-acid chain: Triosephosphate isomerase (254 aa).

12 to 14 contributes to the substrate binding site; it reads NWK. The active-site Electrophile is the H99. E169 serves as the catalytic Proton acceptor. Residues G175, S214, and 235-236 contribute to the substrate site; that span reads GG.

The protein belongs to the triosephosphate isomerase family. As to quaternary structure, homodimer.

It is found in the cytoplasm. The catalysed reaction is D-glyceraldehyde 3-phosphate = dihydroxyacetone phosphate. Its pathway is carbohydrate biosynthesis; gluconeogenesis. It participates in carbohydrate degradation; glycolysis; D-glyceraldehyde 3-phosphate from glycerone phosphate: step 1/1. Functionally, involved in the gluconeogenesis. Catalyzes stereospecifically the conversion of dihydroxyacetone phosphate (DHAP) to D-glyceraldehyde-3-phosphate (G3P). The sequence is that of Triosephosphate isomerase from Brucella abortus biovar 1 (strain 9-941).